A 98-amino-acid chain; its full sequence is MPLIYMNITLAFTMSLLGMLVYRSHLMSSLLCLEGMMLSLFIMITLMTLNTHSLLANIMPITMLVFAACEAAVGLALLASISNTYGLDYVNNLNLLQC.

The next 3 membrane-spanning stretches (helical) occupy residues 1 to 21 (MPLIYMNITLAFTMSLLGMLV), 29 to 49 (SLLCLEGMMLSLFIMITLMTL), and 58 to 78 (IMPITMLVFAACEAAVGLALL).

Belongs to the complex I subunit 4L family. Core subunit of respiratory chain NADH dehydrogenase (Complex I) which is composed of 45 different subunits.

The protein resides in the mitochondrion inner membrane. The catalysed reaction is a ubiquinone + NADH + 5 H(+)(in) = a ubiquinol + NAD(+) + 4 H(+)(out). In terms of biological role, core subunit of the mitochondrial membrane respiratory chain NADH dehydrogenase (Complex I) which catalyzes electron transfer from NADH through the respiratory chain, using ubiquinone as an electron acceptor. Part of the enzyme membrane arm which is embedded in the lipid bilayer and involved in proton translocation. In Pongo abelii (Sumatran orangutan), this protein is NADH-ubiquinone oxidoreductase chain 4L (MT-ND4L).